The chain runs to 633 residues: MPEIRLRHVVSCSSQDSTHCAENLLKADTYRKWRAAKAGEKTISVVLQLEKEEQIHSVDIGNDGSAFVEVLVGSSAGGAGEQDYEVLLVTSSFMSPSESRSGSNPNRVRMFGPDKLVRAAAEKRWDRVKIVCSQPYSKDSPFGLSFVRFHSPPDKDEAEAPSQKVTVTKLGQFRVKEEDESANSLRPGALFFSRINKTSPVTASDPAGPSYAAATLQASSAASSASPVSRAIGSTSKPQESPKGKRKLDLNQEEKKTPSKPPAQLSPSVPKRPKLPAPTRTPATAPVPARAQGAVTGKPRGEGTEPRRPRAGPEELGKILQGVVVVLSGFQNPFRSELRDKALELGAKYRPDWTRDSTHLICAFANTPKYSQVLGLGGRIVRKEWVLDCHRMRRRLPSQRYLMAGPGSSSEEDEASHSGGSGDEAPKLPQKQPQTKTKPTQAAGPSSPQKPPTPEETKAASPVLQEDIDIEGVQSEGQDNGAEDSGDTEDELRRVAEQKEHRLPPGQEENGEDPYAGSTDENTDSEEHQEPPDLPVPELPDFFQGKHFFLYGEFPGDERRKLIRYVTAFNGELEDYMSDRVQFVITAQEWDPSFEEALMDNPSLAFVRPRWIYSCNEKQKLLPHQLYGVVPQA.

A Phosphoserine modification is found at S140. Residue K176 forms a Glycyl lysine isopeptide (Lys-Gly) (interchain with G-Cter in SUMO1); alternate linkage. K176 is covalently cross-linked (Glycyl lysine isopeptide (Lys-Gly) (interchain with G-Cter in SUMO2); alternate). T198 is subject to Phosphothreonine. A Phosphoserine modification is found at S199. T202 bears the Phosphothreonine mark. 3 positions are modified to phosphoserine: S204, S226, and S241. Low complexity predominate over residues 221–231 (AASSASPVSRA). The tract at residues 221–313 (AASSASPVSR…TEPRRPRAGP (93 aa)) is disordered. Over residues 240–257 (ESPKGKRKLDLNQEEKKT) the composition is skewed to basic and acidic residues. T257 carries the phosphothreonine modification. A phosphoserine mark is found at S259 and S266. Residues 277–291 (APTRTPATAPVPARA) are compositionally biased toward low complexity. A Phosphothreonine modification is found at T281. Positions 299–313 (PRGEGTEPRRPRAGP) are enriched in basic and acidic residues. In terms of domain architecture, BRCT 1 spans 315-403 (ELGKILQGVV…RRLPSQRYLM (89 aa)). S371 bears the Phosphoserine; by PRKDC mark. 3 disordered regions span residues 400–462 (RYLM…AASP), 471–490 (EGVQSEGQDNGAEDSGDTED), and 498–536 (QKEHRLPPGQEENGEDPYAGSTDENTDSEEHQEPPDLPV). A phosphoserine mark is found at S408, S409, S410, and S421. Over residues 427–443 (KLPQKQPQTKTKPTQAA) the composition is skewed to low complexity. Phosphoserine occurs at positions 446 and 447. T453 and T457 each carry phosphothreonine. Phosphoserine occurs at positions 461 and 485. Over residues 481 to 490 (GAEDSGDTED) the composition is skewed to acidic residues. T488 bears the Phosphothreonine mark. Phosphoserine is present on S518. 2 positions are modified to phosphothreonine: T519 and T523. A BRCT 2 domain is found at 538–629 (ELPDFFQGKH…KLLPHQLYGV (92 aa)).

As to quaternary structure, homodimer. Interacts with polynucleotide kinase (PNK), DNA polymerase-beta (POLB) and DNA ligase III (LIG3). Interacts with APTX and APLF. Interacts with APEX1; the interaction is induced by SIRT1 and increases with the acetylated form of APEX1. Interacts with (poly-ADP-ribosylated) PARP1. In terms of processing, phosphorylation of Ser-371 causes dimer dissociation. Phosphorylation by CK2 promotes interaction with APTX and APLF. Sumoylated. As to expression, expressed in fibroblasts, retinal pigmented epithelial cells and lymphoblastoid cells (at protein level).

Its subcellular location is the nucleus. It is found in the chromosome. Scaffold protein involved in DNA single-strand break repair by mediating the assembly of DNA break repair protein complexes. Negatively regulates ADP-ribosyltransferase activity of PARP1 during base-excision repair in order to prevent excessive PARP1 activity. Recognizes and binds poly-ADP-ribose chains: specifically binds auto-poly-ADP-ribosylated PARP1, limiting its activity. The protein is DNA repair protein XRCC1 of Homo sapiens (Human).